A 141-amino-acid polypeptide reads, in one-letter code: Large ribosomal subunit protein uL11 (141 aa).

The protein belongs to the universal ribosomal protein uL11 family. Part of the ribosomal stalk of the 50S ribosomal subunit. Interacts with L10 and the large rRNA to form the base of the stalk. L10 forms an elongated spine to which L12 dimers bind in a sequential fashion forming a multimeric L10(L12)X complex. One or more lysine residues are methylated.

Forms part of the ribosomal stalk which helps the ribosome interact with GTP-bound translation factors. This is Large ribosomal subunit protein uL11 from Chloroflexus aggregans (strain MD-66 / DSM 9485).